The following is a 255-amino-acid chain: Ribonuclease PH (255 aa).

Phosphate contacts are provided by residues R86 and 124 to 126 (GTR).

This sequence belongs to the RNase PH family. As to quaternary structure, homohexameric ring arranged as a trimer of dimers.

The enzyme catalyses tRNA(n+1) + phosphate = tRNA(n) + a ribonucleoside 5'-diphosphate. Phosphorolytic 3'-5' exoribonuclease that plays an important role in tRNA 3'-end maturation. Removes nucleotide residues following the 3'-CCA terminus of tRNAs; can also add nucleotides to the ends of RNA molecules by using nucleoside diphosphates as substrates, but this may not be physiologically important. Probably plays a role in initiation of 16S rRNA degradation (leading to ribosome degradation) during starvation. The polypeptide is Ribonuclease PH (Hydrogenobaculum sp. (strain Y04AAS1)).